We begin with the raw amino-acid sequence, 363 residues long: Ribosomal RNA large subunit methyltransferase M (363 aa).

Residues Ser-190, 223–226 (CPGG), Asp-242, Asp-262, and Asp-279 each bind S-adenosyl-L-methionine. Lys-308 (proton acceptor) is an active-site residue.

Belongs to the class I-like SAM-binding methyltransferase superfamily. RNA methyltransferase RlmE family. RlmM subfamily. As to quaternary structure, monomer.

The protein resides in the cytoplasm. It carries out the reaction cytidine(2498) in 23S rRNA + S-adenosyl-L-methionine = 2'-O-methylcytidine(2498) in 23S rRNA + S-adenosyl-L-homocysteine + H(+). Catalyzes the 2'-O-methylation at nucleotide C2498 in 23S rRNA. This chain is Ribosomal RNA large subunit methyltransferase M, found in Vibrio atlanticus (strain LGP32) (Vibrio splendidus (strain Mel32)).